The primary structure comprises 421 residues: UPF0229 protein lpp2857 (421 aa).

The disordered stretch occupies residues 83-110 (IAGDRIKRPSGGGAGGAGGNASDSGEGE). A compositionally biased stretch (gly residues) spans 92–101 (SGGGAGGAGG).

It belongs to the UPF0229 family.

The protein is UPF0229 protein lpp2857 of Legionella pneumophila (strain Paris).